The chain runs to 449 residues: Phosphoglucosamine mutase (449 aa).

The Phosphoserine intermediate role is filled by Ser102. Positions 102, 241, 243, and 245 each coordinate Mg(2+). Residue Ser102 is modified to Phosphoserine.

Belongs to the phosphohexose mutase family. Mg(2+) serves as cofactor. Activated by phosphorylation.

The enzyme catalyses alpha-D-glucosamine 1-phosphate = D-glucosamine 6-phosphate. Catalyzes the conversion of glucosamine-6-phosphate to glucosamine-1-phosphate. The protein is Phosphoglucosamine mutase of Roseobacter denitrificans (strain ATCC 33942 / OCh 114) (Erythrobacter sp. (strain OCh 114)).